The following is a 548-amino-acid chain: Chaperonin GroEL (548 aa).

Residues 29–32 (TLGP), Lys-50, 86–90 (DGTTT), Gly-413, 479–481 (NAA), and Asp-496 each bind ATP.

The protein belongs to the chaperonin (HSP60) family. In terms of assembly, forms a cylinder of 14 subunits composed of two heptameric rings stacked back-to-back. Interacts with the co-chaperonin GroES.

The protein localises to the cytoplasm. The catalysed reaction is ATP + H2O + a folded polypeptide = ADP + phosphate + an unfolded polypeptide.. Functionally, together with its co-chaperonin GroES, plays an essential role in assisting protein folding. The GroEL-GroES system forms a nano-cage that allows encapsulation of the non-native substrate proteins and provides a physical environment optimized to promote and accelerate protein folding. This Deinococcus radiodurans (strain ATCC 13939 / DSM 20539 / JCM 16871 / CCUG 27074 / LMG 4051 / NBRC 15346 / NCIMB 9279 / VKM B-1422 / R1) protein is Chaperonin GroEL.